The sequence spans 284 residues: Quinate/shikimate dehydrogenase (NAD(+)) (284 aa).

Shikimate is bound by residues Ser18 and Thr70. Residues 18 to 20 (SRT) and Thr70 each bind L-quinate. Catalysis depends on Tyr73, which acts as the Proton acceptor. Positions 74, 95, and 111 each coordinate shikimate. Positions 74, 95, and 111 each coordinate L-quinate. NAD(+) is bound by residues 137-138 (GG), Asp159, Arg164, 203-206 (TPMG), Ala214, Val229, and Gly252. Residue Gln259 coordinates shikimate. Gln259 is an L-quinate binding site.

Belongs to the shikimate dehydrogenase family. As to quaternary structure, homodimer.

It carries out the reaction L-quinate + NAD(+) = 3-dehydroquinate + NADH + H(+). It catalyses the reaction shikimate + NAD(+) = 3-dehydroshikimate + NADH + H(+). It functions in the pathway metabolic intermediate biosynthesis; chorismate biosynthesis; chorismate from D-erythrose 4-phosphate and phosphoenolpyruvate: step 4/7. Its pathway is aromatic compound metabolism; 3,4-dihydroxybenzoate biosynthesis; 3-dehydroquinate from D-quinate (NAD(+) route). Involved in the biosynthesis of the chorismate, which leads to the biosynthesis of aromatic amino acids, and plays a key role in the quinate degradation pathway. Catalyzes the NAD(+)-dependent oxidation of both quinate and shikimate to 3-dehydroquinate and 3-dehydroshikimate, respectively. It can only use NAD. In Corynebacterium efficiens (strain DSM 44549 / YS-314 / AJ 12310 / JCM 11189 / NBRC 100395), this protein is Quinate/shikimate dehydrogenase (NAD(+)).